The primary structure comprises 546 residues: Arginine--tRNA ligase (546 aa).

A 'HIGH' region motif is present at residues 122-132; the sequence is ANPTGPFTVGH.

It belongs to the class-I aminoacyl-tRNA synthetase family. Monomer.

Its subcellular location is the cytoplasm. It catalyses the reaction tRNA(Arg) + L-arginine + ATP = L-arginyl-tRNA(Arg) + AMP + diphosphate. This is Arginine--tRNA ligase (argS) from Thermotoga maritima (strain ATCC 43589 / DSM 3109 / JCM 10099 / NBRC 100826 / MSB8).